Here is a 291-residue protein sequence, read N- to C-terminus: Dihydroorotate dehydrogenase B (NAD(+)), catalytic subunit (291 aa).

FMN is bound by residues Ser17 and 42-43; that span reads KT. Substrate-binding positions include Lys42, 67–71, and Asn118; that span reads NAIGL. Residue Asn118 participates in FMN binding. The active-site Nucleophile is Ser121. FMN contacts are provided by Lys153 and Ile178. Residue 179–180 coordinates substrate; sequence NT. Residues Gly204, 230–231, and 252–253 contribute to the FMN site; these read GG and GT.

The protein belongs to the dihydroorotate dehydrogenase family. Type 1 subfamily. As to quaternary structure, heterotetramer of 2 PyrK and 2 PyrD type B subunits. FMN is required as a cofactor.

The protein resides in the cytoplasm. It catalyses the reaction (S)-dihydroorotate + NAD(+) = orotate + NADH + H(+). It functions in the pathway pyrimidine metabolism; UMP biosynthesis via de novo pathway; orotate from (S)-dihydroorotate (NAD(+) route): step 1/1. In terms of biological role, catalyzes the conversion of dihydroorotate to orotate with NAD(+) as electron acceptor. The chain is Dihydroorotate dehydrogenase B (NAD(+)), catalytic subunit (pyrD) from Sulfolobus acidocaldarius (strain ATCC 33909 / DSM 639 / JCM 8929 / NBRC 15157 / NCIMB 11770).